A 282-amino-acid chain; its full sequence is Pantothenate synthetase (282 aa).

30 to 37 (MGYLHEGH) is an ATP binding site. His37 functions as the Proton donor in the catalytic mechanism. Gln61 lines the (R)-pantoate pocket. Gln61 serves as a coordination point for beta-alanine. An ATP-binding site is contributed by 147–150 (GMKD). Gln153 lines the (R)-pantoate pocket. Residues Val176 and 184–187 (KSSR) each bind ATP.

The protein belongs to the pantothenate synthetase family. Homodimer.

The protein localises to the cytoplasm. It carries out the reaction (R)-pantoate + beta-alanine + ATP = (R)-pantothenate + AMP + diphosphate + H(+). It functions in the pathway cofactor biosynthesis; (R)-pantothenate biosynthesis; (R)-pantothenate from (R)-pantoate and beta-alanine: step 1/1. Its function is as follows. Catalyzes the condensation of pantoate with beta-alanine in an ATP-dependent reaction via a pantoyl-adenylate intermediate. The protein is Pantothenate synthetase of Bacillus cereus (strain ZK / E33L).